The following is a 344-amino-acid chain: Methionine import ATP-binding protein MetN (344 aa).

The ABC transporter domain occupies 2 to 241; it reads IELQGLSQRF…PQHDVTRAMI (240 aa). ATP is bound at residue 38-45; the sequence is GRSGAGKS.

The protein belongs to the ABC transporter superfamily. Methionine importer (TC 3.A.1.24) family. As to quaternary structure, the complex is composed of two ATP-binding proteins (MetN), two transmembrane proteins (MetI) and a solute-binding protein (MetQ).

The protein localises to the cell inner membrane. The catalysed reaction is L-methionine(out) + ATP + H2O = L-methionine(in) + ADP + phosphate + H(+). The enzyme catalyses D-methionine(out) + ATP + H2O = D-methionine(in) + ADP + phosphate + H(+). Its function is as follows. Part of the ABC transporter complex MetNIQ involved in methionine import. Responsible for energy coupling to the transport system. This chain is Methionine import ATP-binding protein MetN, found in Cupriavidus necator (strain ATCC 17699 / DSM 428 / KCTC 22496 / NCIMB 10442 / H16 / Stanier 337) (Ralstonia eutropha).